The sequence spans 115 residues: MDIFKKIEREQMRLDIPSFKSGDTIKVYFRIVEGEKERIQVFQGNVIRIHRGTTNATITVRKISDGVGVERIVPLHSPLVDHIEVVSEGRVRRSRLYYLRNLRGNAARIKPKKIY.

The protein belongs to the bacterial ribosomal protein bL19 family.

This protein is located at the 30S-50S ribosomal subunit interface and may play a role in the structure and function of the aminoacyl-tRNA binding site. This chain is Large ribosomal subunit protein bL19, found in Lawsonia intracellularis (strain PHE/MN1-00).